The sequence spans 267 residues: Probable aquaporin TIP3-2 (267 aa).

The residue at position 1 (Met-1) is an N-acetylmethionine. Position 2 is an N-acetylalanine; in Probable aquaporin TIP3-2, N-terminally processed (Ala-2). Residues 2–26 lie on the Cytoplasmic side of the membrane; the sequence is ATSARRAYGFGRADEATHPDSIRAT. Residues 27-47 form a helical membrane-spanning segment; the sequence is LAEFLSTFVFVFAGEGSILAL. Over 48 to 66 the chain is Vacuolar; it reads DKLYWDTAAHTGTNTPGGL. Residues 67–87 form a helical membrane-spanning segment; that stretch reads VLVALAHALALFAAVSAAINV. Residues 88 to 110 lie on the Cytoplasmic side of the membrane; sequence SGGHVNPAVTFAALIGGRISVIR. The NPA 1 motif lies at 93–95; that stretch reads NPA. Residues 111–131 traverse the membrane as a helical segment; the sequence is AIYYWVAQLIGAILACLLLRL. The Vacuolar portion of the chain corresponds to 132-151; sequence ATNGLRPVGFHVASGVSELH. Residues 152–172 traverse the membrane as a helical segment; that stretch reads GLLMEIILTFALVYVVYSTAI. Over 173 to 178 the chain is Cytoplasmic; that stretch reads DPKRGS. A helical transmembrane segment spans residues 179–199; it reads IGIIAPLAIGLIVGANILVGG. Residues 200–226 are Vacuolar-facing; it reads PFDGASMNPARAFGPALVGWRWSNHWI. The NPA 2 signature appears at 207–209; sequence NPA. The helical transmembrane segment at 227–247 threads the bilayer; that stretch reads YWVGPFIGGALAALIYEYMII. At 248 to 267 the chain is on the cytoplasmic side; the sequence is PSVNEPPHHSTHQPLAPEDY.

This sequence belongs to the MIP/aquaporin (TC 1.A.8) family. TIP (TC 1.A.8.10) subfamily. As to expression, predominantly expressed in developing seeds. Also expressed in rosette leaves.

It localises to the vacuole membrane. In terms of biological role, aquaporins facilitate the transport of water and small neutral solutes across cell membranes. The sequence is that of Probable aquaporin TIP3-2 (TIP3-2) from Arabidopsis thaliana (Mouse-ear cress).